The chain runs to 302 residues: Quinolinate synthase (302 aa).

The iminosuccinate site is built by His-24 and Ser-41. Residue Cys-86 participates in [4Fe-4S] cluster binding. Iminosuccinate-binding positions include 112–114 (YVN) and Ser-129. Cys-171 contributes to the [4Fe-4S] cluster binding site. Residues 197 to 199 (HPE) and Thr-214 each bind iminosuccinate. Cys-259 is a binding site for [4Fe-4S] cluster.

It belongs to the quinolinate synthase family. Type 2 subfamily. It depends on [4Fe-4S] cluster as a cofactor.

It localises to the cytoplasm. It catalyses the reaction iminosuccinate + dihydroxyacetone phosphate = quinolinate + phosphate + 2 H2O + H(+). Its pathway is cofactor biosynthesis; NAD(+) biosynthesis; quinolinate from iminoaspartate: step 1/1. In terms of biological role, catalyzes the condensation of iminoaspartate with dihydroxyacetone phosphate to form quinolinate. This Dehalococcoides mccartyi (strain ATCC BAA-2266 / KCTC 15142 / 195) (Dehalococcoides ethenogenes (strain 195)) protein is Quinolinate synthase.